Consider the following 345-residue polypeptide: Glycerol-3-phosphate dehydrogenase [NAD(P)+] (345 aa).

4 residues coordinate NADPH: Ser-23, Tyr-24, His-44, and Lys-118. Sn-glycerol 3-phosphate-binding residues include Lys-118, Gly-147, and Thr-149. Residue Ala-151 coordinates NADPH. Sn-glycerol 3-phosphate contacts are provided by Lys-203, Asp-256, Ser-266, Arg-267, and Asn-268. Lys-203 serves as the catalytic Proton acceptor. NADPH is bound at residue Arg-267. Val-291 and Glu-293 together coordinate NADPH.

This sequence belongs to the NAD-dependent glycerol-3-phosphate dehydrogenase family.

The protein resides in the cytoplasm. It catalyses the reaction sn-glycerol 3-phosphate + NAD(+) = dihydroxyacetone phosphate + NADH + H(+). The enzyme catalyses sn-glycerol 3-phosphate + NADP(+) = dihydroxyacetone phosphate + NADPH + H(+). The protein operates within membrane lipid metabolism; glycerophospholipid metabolism. Its function is as follows. Catalyzes the reduction of the glycolytic intermediate dihydroxyacetone phosphate (DHAP) to sn-glycerol 3-phosphate (G3P), the key precursor for phospholipid synthesis. The sequence is that of Glycerol-3-phosphate dehydrogenase [NAD(P)+] from Vibrio vulnificus (strain CMCP6).